A 596-amino-acid polypeptide reads, in one-letter code: Arrestin domain-containing protein C31A2.12 (596 aa).

Residues 194–211 form a helical membrane-spanning segment; it reads AYAIGSYIPIHFVLVPLL. Disordered stretches follow at residues 363–387 and 405–446; these read NLDT…TYAS and QQQP…VITR. 2 positions are modified to phosphothreonine: Thr373 and Thr374. Polar residues-rich tracts occupy residues 405–420 and 430–446; these read QQQP…SPSN and SLGS…VITR. Phosphoserine occurs at positions 452, 474, 493, and 497. The interval 493-596 is disordered; the sequence is SRPPSPGIVT…MLPSGFSRRN (104 aa). Phosphothreonine is present on residues Thr502 and Thr507. The segment covering 504–522 has biased composition (polar residues); the sequence is PQRTSPSFFVSPTESTRQS. Ser514 carries the post-translational modification Phosphoserine. Low complexity predominate over residues 531–555; it reads HSTSSSSGISPSHSSASLAHLSQAS.

The protein belongs to the arrestin family.

The protein localises to the membrane. This Schizosaccharomyces pombe (strain 972 / ATCC 24843) (Fission yeast) protein is Arrestin domain-containing protein C31A2.12.